The chain runs to 99 residues: Sec-independent protein translocase protein TatA (99 aa).

Residues 1–21 form a helical membrane-spanning segment; it reads MIGNLKPLEIVLIIAVILLLF. The disordered stretch occupies residues 46–99; that stretch reads AMKKDDAATAAPTTETVADDTVPPQSTTARTIQAAPGDVTSSRPVSEAKPTTQS. Residues 53-69 show a composition bias toward low complexity; that stretch reads ATAAPTTETVADDTVPP. Polar residues predominate over residues 84–99; it reads VTSSRPVSEAKPTTQS.

It belongs to the TatA/E family. The Tat system comprises two distinct complexes: a TatABC complex, containing multiple copies of TatA, TatB and TatC subunits, and a separate TatA complex, containing only TatA subunits. Substrates initially bind to the TatABC complex, which probably triggers association of the separate TatA complex to form the active translocon.

The protein resides in the cell membrane. Its function is as follows. Part of the twin-arginine translocation (Tat) system that transports large folded proteins containing a characteristic twin-arginine motif in their signal peptide across membranes. TatA could form the protein-conducting channel of the Tat system. The protein is Sec-independent protein translocase protein TatA of Streptomyces griseus subsp. griseus (strain JCM 4626 / CBS 651.72 / NBRC 13350 / KCC S-0626 / ISP 5235).